Consider the following 293-residue polypeptide: MPWIQLRIDTDGPHADAISDQLMEEGSLSITFEDGKDSPIYEPTLGETPLWNHTVIIALFEANFDLSPVVERLKQLPCLGENFSYKIEQVEDKDWEREWMDNFHPIKFGDRLWICPSWREIPDPTAVNVILDPGLAFGTGTHPTTALCLEWLDGLDYSNKDVIDFGCGSGILAVAALKLGAERVTGIDIDYQAIEASKANAERNGVQDKLELYLPEDQPADLLADILVANILAGPLRELAPLIAEKVKPGGLLALSGLLQEQAEEVSAFYSQWFDMDEPAHKDDWSRLTGVRK.

Residues Thr145, Gly166, Asp188, and Asn230 each contribute to the S-adenosyl-L-methionine site.

This sequence belongs to the methyltransferase superfamily. PrmA family.

It localises to the cytoplasm. It catalyses the reaction L-lysyl-[protein] + 3 S-adenosyl-L-methionine = N(6),N(6),N(6)-trimethyl-L-lysyl-[protein] + 3 S-adenosyl-L-homocysteine + 3 H(+). In terms of biological role, methylates ribosomal protein L11. This Shewanella halifaxensis (strain HAW-EB4) protein is Ribosomal protein L11 methyltransferase.